A 117-amino-acid chain; its full sequence is Large ribosomal subunit protein bL19 (117 aa).

The protein belongs to the bacterial ribosomal protein bL19 family.

This protein is located at the 30S-50S ribosomal subunit interface and may play a role in the structure and function of the aminoacyl-tRNA binding site. The sequence is that of Large ribosomal subunit protein bL19 from Colwellia psychrerythraea (strain 34H / ATCC BAA-681) (Vibrio psychroerythus).